Reading from the N-terminus, the 88-residue chain is Acyl-CoA-binding domain-containing protein 7 (88 aa).

Residues 3–88 (LQADFDRAAE…AKELIEKYGI (86 aa)) form the ACB domain. Residues arginine 15, 30–34 (YGLYK), lysine 56, and tyrosine 75 contribute to the an acyl-CoA site.

Belongs to the ACBD7 family.

Its function is as follows. Binds medium- and long-chain acyl-CoA esters. This is Acyl-CoA-binding domain-containing protein 7 (ACBD7) from Homo sapiens (Human).